The sequence spans 184 residues: Large ribosomal subunit protein uL6 (184 aa).

It belongs to the universal ribosomal protein uL6 family. As to quaternary structure, part of the 50S ribosomal subunit.

This protein binds to the 23S rRNA, and is important in its secondary structure. It is located near the subunit interface in the base of the L7/L12 stalk, and near the tRNA binding site of the peptidyltransferase center. The chain is Large ribosomal subunit protein uL6 from Desulfurococcus amylolyticus (strain DSM 18924 / JCM 16383 / VKM B-2413 / 1221n) (Desulfurococcus kamchatkensis).